Here is a 289-residue protein sequence, read N- to C-terminus: Iodotyrosine deiodinase 1 (289 aa).

The chain crosses the membrane as a helical span at residues 1-21 (MYFLTPILVAILCILVVWIFK). A compositionally biased stretch (basic and acidic residues) spans 29–58 (KKKGEPRTRAEARPWVDEDLKDSSDLHQAE). The disordered stretch occupies residues 29–69 (KKKGEPRTRAEARPWVDEDLKDSSDLHQAEEDADEWQESEE). Acidic residues predominate over residues 59–69 (EDADEWQESEE). FMN contacts are provided by residues 100–104 (RRSVR), serine 128, and 128–129 (SG). 4 residues coordinate 3-iodo-L-tyrosine: alanine 130, glutamate 157, tyrosine 161, and lysine 182. FMN is bound by residues 237–239 (TTT) and arginine 279.

The protein belongs to the nitroreductase family. In terms of assembly, homodimer. Requires FMN as cofactor. As to expression, expressed at a high level in thyroid gland (at protein level). Expressed at a high level in thyroid gland and at lower level in kidney and trachea.

It localises to the cell membrane. Its subcellular location is the cytoplasmic vesicle membrane. The enzyme catalyses 2 iodide + L-tyrosine + 2 NADP(+) = 3,5-diiodo-L-tyrosine + 2 NADPH + H(+). It catalyses the reaction iodide + L-tyrosine + NADP(+) = 3-iodo-L-tyrosine + NADPH. It carries out the reaction 3-iodo-L-tyrosine + iodide + NADP(+) = 3,5-diiodo-L-tyrosine + NADPH + H(+). The catalysed reaction is L-tyrosine + chloride + NADP(+) = 3-chloro-L-tyrosine + NADPH. The enzyme catalyses bromide + L-tyrosine + NADP(+) = 3-bromo-L-tyrosine + NADPH. Catalyzes the dehalogenation of halotyrosines such as 3-bromo-L-tyrosine, 3-chloro-L-tyrosine, 3-iodo-L-tyrosine and 3,5-diiodo-L-tyrosine. During thyroid hormone biosynthesis, facilitates iodide salvage by catalysing the oxidative NADPH-dependent deiodination of the halogenated by-products of thyroid hormone production, monoiodotyrosine (L-MIT) and diiodotyrosine (L-DIT). The scavanged iodide can then reenter the hormone-producing pathways. Acts more efficiently on 3-iodo-L-tyrosine than 3,5-diiodo-L-tyrosine. The sequence is that of Iodotyrosine deiodinase 1 from Homo sapiens (Human).